A 455-amino-acid chain; its full sequence is Exodeoxyribonuclease 7 large subunit (455 aa).

Belongs to the XseA family. In terms of assembly, heterooligomer composed of large and small subunits.

It localises to the cytoplasm. The enzyme catalyses Exonucleolytic cleavage in either 5'- to 3'- or 3'- to 5'-direction to yield nucleoside 5'-phosphates.. Functionally, bidirectionally degrades single-stranded DNA into large acid-insoluble oligonucleotides, which are then degraded further into small acid-soluble oligonucleotides. This is Exodeoxyribonuclease 7 large subunit from Oceanobacillus iheyensis (strain DSM 14371 / CIP 107618 / JCM 11309 / KCTC 3954 / HTE831).